Here is a 355-residue protein sequence, read N- to C-terminus: uncharacterized protein (355 aa).

It is found in the cytoplasm. This is an uncharacterized protein from Saccharomyces cerevisiae (strain ATCC 204508 / S288c) (Baker's yeast).